The chain runs to 656 residues: UV-damage endonuclease (656 aa).

Disordered regions lie at residues 1-82, 119-146, 175-194, 241-264, 492-515, 550-620, and 636-656; these read MPSR…GKEQ, PSVV…KEPV, IIEP…RPPA, PLQF…EPQD, EPCD…TLPP, DMVP…GPYN, and KREV…EFDG. Low complexity predominate over residues 13–32; the sequence is TPQSESSTFSSTLDSSAPSP. 2 stretches are compositionally biased toward basic and acidic residues: residues 48-82 and 135-146; these read SEKD…GKEQ and TNAEEREAKEPV. Residues 550 to 561 show a composition bias toward basic and acidic residues; that stretch reads DMVPYDRDDENR. Over residues 568–579 the composition is skewed to basic residues; the sequence is APKKKKGGKRKR. Acidic residues predominate over residues 583–595; sequence EEAAEPEEVDTAA. The segment covering 596–614 has biased composition (basic and acidic residues); that stretch reads DDVKDAPEGPKEVPEEERA. Residues 647 to 656 show a composition bias toward acidic residues; the sequence is EVEDEGEFDG.

This sequence belongs to the uve1/UvsE family. The cofactor is Mg(2+).

Functionally, endonuclease for the repair of UV-irradiated DNA. Involved in the excision of cyclobutane pyrimidine dimers (CPD) and 6-4 pyrimidine pyrimidones (6-4PP) which forms the UV damage repair (UVDR) pathway. The chain is UV-damage endonuclease (mus-18) from Neurospora crassa (strain ATCC 24698 / 74-OR23-1A / CBS 708.71 / DSM 1257 / FGSC 987).